A 1172-amino-acid polypeptide reads, in one-letter code: Phytochrome B (1172 aa).

The segment covering 1 to 16 (MVSGVGGSGGGRGGGR) has biased composition (gly residues). The interval 1-54 (MVSGVGGSGGGRGGGRGGEEEPSSSHTPNNRRGGEQAQSSGTKSLRPRSNTESM) is disordered. Positions 24 to 54 (SSHTPNNRRGGEQAQSSGTKSLRPRSNTESM) are enriched in polar residues. In terms of domain architecture, GAF spans 252–433 (DIKLLCDTVV…AFGLQLNMEL (182 aa)). A phytochromobilin-binding site is contributed by cysteine 357. 2 consecutive PAS domains span residues 652-723 (VARE…LRGD) and 786-857 (DYKA…MIVL). In terms of domain architecture, Histidine kinase spans 934–1153 (YICQVIKNPL…LIILELPVPR (220 aa)).

Belongs to the phytochrome family. As to quaternary structure, homodimer. Interacts with ADO1 and PKS4. Stabilized by interactions with PAPP5 and FYPP3 which are enhanced in the phosphorylated Pfr form. Interacts with VOZ1 and VOZ2. Binds, via its photosensory domain, to PTAC12/HMR/PAP5 when photoactivated; this interaction stimulates its localization to photobodies. Interacts with CRY1 specifically when in the dark/far-red (Pr) state, but not when red light-activated (Pfr). Interacts with PIF4 and PIF5 in response to low blue light (LBL). Component of a red light-dependent nuclear complex made of PHL, PHYB and CO. Interacts directly with PHL. Binds to UNE10/PIF8 when red light-activated (Pfr). When light-activated, interacts with PCH1 and PCHL. Associated with DRT111/RSN2/SFPS, SMP2 and SWAP1 in nuclear photobodies upon response to red light (Pfr form). Contains one covalently linked phytochromobilin chromophore. Expressed in fruits, flowers, leaves, stems, seedlings and roots.

Its subcellular location is the cytoplasm. It is found in the nucleus. It localises to the nucleoplasm. The protein localises to the nucleus speckle. Functionally, regulatory photoreceptor which exists in two forms that are reversibly interconvertible by light: the Pr form that absorbs maximally in the red region of the spectrum and the Pfr form that absorbs maximally in the far-red region. Photoconversion of Pr to Pfr induces an array of morphogenetic responses, whereas reconversion of Pfr to Pr cancels the induction of those responses. Pfr controls the expression of a number of nuclear genes including those encoding the small subunit of ribulose-bisphosphate carboxylase, chlorophyll A/B binding protein, protochlorophyllide reductase, rRNA, etc. It also controls the expression of its own gene(s) in a negative feedback fashion. Involved in the flowering time regulation. Involved in light-regulated circadian phase control that triggers stomatal aperture, stomatal conductance, and CO(2) assimilation. Implicated in red light perception, and, to a lower extent, in blue light signaling. Controls thermomorphogenesis in the daytime and regulates temperature responses by associating with the promoters of key target genes in a temperature-dependent manner and subsequently repressing their expression in a PIF4-dependent manner (temperature-responsive transcriptional regulator); this process requires PTAC12/HMR/PAP5 (transcriptional activator). Thermal timer that integrates temperature information over the course of the night. Detabilizes UNE10/PIF8 in red light. The protein is Phytochrome B of Arabidopsis thaliana (Mouse-ear cress).